We begin with the raw amino-acid sequence, 359 residues long: DNA replication and repair protein RecF (359 aa).

30-37 contributes to the ATP binding site; it reads GPNGSGKT.

It belongs to the RecF family.

Its subcellular location is the cytoplasm. Functionally, the RecF protein is involved in DNA metabolism; it is required for DNA replication and normal SOS inducibility. RecF binds preferentially to single-stranded, linear DNA. It also seems to bind ATP. The protein is DNA replication and repair protein RecF of Aliivibrio fischeri (strain ATCC 700601 / ES114) (Vibrio fischeri).